The primary structure comprises 212 residues: Uracil phosphoribosyltransferase (212 aa).

Residues Arg-78, Arg-103, and Asp-130–Ser-138 each bind 5-phospho-alpha-D-ribose 1-diphosphate. Uracil contacts are provided by residues Ile-193 and Gly-198–Ala-200. Asp-199 contacts 5-phospho-alpha-D-ribose 1-diphosphate.

It belongs to the UPRTase family. The cofactor is Mg(2+).

It catalyses the reaction UMP + diphosphate = 5-phospho-alpha-D-ribose 1-diphosphate + uracil. The protein operates within pyrimidine metabolism; UMP biosynthesis via salvage pathway; UMP from uracil: step 1/1. Allosterically activated by GTP. In terms of biological role, catalyzes the conversion of uracil and 5-phospho-alpha-D-ribose 1-diphosphate (PRPP) to UMP and diphosphate. This is Uracil phosphoribosyltransferase from Bordetella avium (strain 197N).